Reading from the N-terminus, the 70-residue chain is Large ribosomal subunit protein bL31 (70 aa).

Residues Cys-16, Cys-18, Cys-37, and Cys-40 each coordinate Zn(2+).

The protein belongs to the bacterial ribosomal protein bL31 family. Type A subfamily. In terms of assembly, part of the 50S ribosomal subunit. Zn(2+) is required as a cofactor.

Functionally, binds the 23S rRNA. This Haemophilus ducreyi (strain 35000HP / ATCC 700724) protein is Large ribosomal subunit protein bL31.